The sequence spans 356 residues: Glycerol-3-phosphate dehydrogenase [NAD(P)+] (356 aa).

NADPH is bound by residues W12, R32, R33, and K117. Sn-glycerol 3-phosphate-binding residues include K117, G151, and S153. A155 contributes to the NADPH binding site. Positions 206, 265, 276, and 277 each coordinate sn-glycerol 3-phosphate. The active-site Proton acceptor is the K206. R276 lines the NADPH pocket. Positions 309 and 311 each coordinate NADPH.

This sequence belongs to the NAD-dependent glycerol-3-phosphate dehydrogenase family.

The protein localises to the cytoplasm. The catalysed reaction is sn-glycerol 3-phosphate + NAD(+) = dihydroxyacetone phosphate + NADH + H(+). It carries out the reaction sn-glycerol 3-phosphate + NADP(+) = dihydroxyacetone phosphate + NADPH + H(+). Its pathway is membrane lipid metabolism; glycerophospholipid metabolism. Catalyzes the reduction of the glycolytic intermediate dihydroxyacetone phosphate (DHAP) to sn-glycerol 3-phosphate (G3P), the key precursor for phospholipid synthesis. The polypeptide is Glycerol-3-phosphate dehydrogenase [NAD(P)+] (Treponema pallidum (strain Nichols)).